Reading from the N-terminus, the 398-residue chain is Carbamoyl phosphate synthase small chain (398 aa).

The segment at 1–204 (MSPLLPSFPP…PAYGTLDTGK (204 aa)) is CPSase. Positions 53, 256, and 258 each coordinate L-glutamine. Residues 208–395 (KVVAYDFGVK…VELMNAASKK (188 aa)) enclose the Glutamine amidotransferase type-1 domain. Residue C284 is the Nucleophile of the active site. 5 residues coordinate L-glutamine: L285, Q288, N326, G328, and F329. Catalysis depends on residues H368 and E370.

Belongs to the CarA family. Composed of two chains; the small (or glutamine) chain promotes the hydrolysis of glutamine to ammonia, which is used by the large (or ammonia) chain to synthesize carbamoyl phosphate. Tetramer of heterodimers (alpha,beta)4.

It catalyses the reaction hydrogencarbonate + L-glutamine + 2 ATP + H2O = carbamoyl phosphate + L-glutamate + 2 ADP + phosphate + 2 H(+). It carries out the reaction L-glutamine + H2O = L-glutamate + NH4(+). Its pathway is amino-acid biosynthesis; L-arginine biosynthesis; carbamoyl phosphate from bicarbonate: step 1/1. The protein operates within pyrimidine metabolism; UMP biosynthesis via de novo pathway; (S)-dihydroorotate from bicarbonate: step 1/3. Functionally, small subunit of the glutamine-dependent carbamoyl phosphate synthetase (CPSase). CPSase catalyzes the formation of carbamoyl phosphate from the ammonia moiety of glutamine, carbonate, and phosphate donated by ATP, constituting the first step of 2 biosynthetic pathways, one leading to arginine and/or urea and the other to pyrimidine nucleotides. The small subunit (glutamine amidotransferase) binds and cleaves glutamine to supply the large subunit with the substrate ammonia. This chain is Carbamoyl phosphate synthase small chain, found in Polynucleobacter necessarius subsp. necessarius (strain STIR1).